The sequence spans 458 residues: tRNA modification GTPase MnmE (458 aa).

Residues arginine 22, glutamate 84, and arginine 123 each contribute to the (6S)-5-formyl-5,6,7,8-tetrahydrofolate site. The TrmE-type G domain maps to 220–379 (GIATAIIGRP…LEKAIADLFF (160 aa)). Position 230 (asparagine 230) interacts with K(+). GTP-binding positions include 230-235 (NVGKSS), 249-255 (TDIAGTT), and 274-277 (DTAG). Serine 234 provides a ligand contact to Mg(2+). Residues threonine 249, isoleucine 251, and threonine 254 each coordinate K(+). Threonine 255 is a Mg(2+) binding site. Lysine 458 contributes to the (6S)-5-formyl-5,6,7,8-tetrahydrofolate binding site.

The protein belongs to the TRAFAC class TrmE-Era-EngA-EngB-Septin-like GTPase superfamily. TrmE GTPase family. Homodimer. Heterotetramer of two MnmE and two MnmG subunits. K(+) serves as cofactor.

Its subcellular location is the cytoplasm. In terms of biological role, exhibits a very high intrinsic GTPase hydrolysis rate. Involved in the addition of a carboxymethylaminomethyl (cmnm) group at the wobble position (U34) of certain tRNAs, forming tRNA-cmnm(5)s(2)U34. The sequence is that of tRNA modification GTPase MnmE from Bacillus anthracis.